The sequence spans 138 residues: ATP synthase epsilon chain (138 aa).

This sequence belongs to the ATPase epsilon chain family. As to quaternary structure, F-type ATPases have 2 components, CF(1) - the catalytic core - and CF(0) - the membrane proton channel. CF(1) has five subunits: alpha(3), beta(3), gamma(1), delta(1), epsilon(1). CF(0) has three main subunits: a, b and c.

The protein resides in the cell inner membrane. Produces ATP from ADP in the presence of a proton gradient across the membrane. The chain is ATP synthase epsilon chain from Polaromonas sp. (strain JS666 / ATCC BAA-500).